A 146-amino-acid chain; its full sequence is MKASVVLSLLGYLVVPSGAYILGRCTVAKKLHDGGLDYFEGYSLENWVCLAYFESKFNPMAIYENTREGYTGFGLFQMRGSDWCGDHGRNRCHMSCSALLNPNLEKTIKCAKTIVKGKEGMGAWPTWSRYCQYSDTLARWLDGCKL.

The signal sequence occupies residues 1-19 (MKASVVLSLLGYLVVPSGA). Residues 20–146 (YILGRCTVAK…LARWLDGCKL (127 aa)) form the C-type lysozyme domain. Intrachain disulfides connect cysteine 25-cysteine 144, cysteine 49-cysteine 131, cysteine 84-cysteine 96, and cysteine 92-cysteine 110. Glutamate 54 is an active-site residue.

Belongs to the glycosyl hydrolase 22 family. Monomer. As to expression, expressed in testis and epididymis.

It is found in the secreted. Its subcellular location is the cytoplasmic vesicle. The protein resides in the secretory vesicle. It localises to the acrosome. The protein localises to the cell projection. It is found in the cilium. Its subcellular location is the flagellum. Functionally, may be involved in fertilization. Has no detectable bacteriolytic and lysozyme activities in vitro. The protein is Lysozyme-like protein 4 (LYZL4) of Homo sapiens (Human).